The sequence spans 285 residues: MTEFTTLLQQGSAWFFIPSAILLGALHGLEPGHSKTMMAAFIIAIKGTIKQAVMLGLAATISHTAVVWLIAFGGMVISKRFTAQSAEPWLQLISAVIIISTAFWMFWRTWRGERNWLENMHEHEHDHEHHHHDHEHHQDHDHDHDHEHHHHHEHGDNEEYQDAHARAHANDIKRHFDGREVTNWQILLFGLTGGLIPCPAAITVLLICIQLKALTLGATLVVSFSIGLALTLVTVGVGAAISVQQVAKRWSGFNTLAKRAPYFSSLLIGLVGVYMGVHGFMGIMR.

Residues 1–10 lie on the Periplasmic side of the membrane; that stretch reads MTEFTTLLQQ. Residues 11–31 form a helical membrane-spanning segment; that stretch reads GSAWFFIPSAILLGALHGLEP. The Cytoplasmic portion of the chain corresponds to 32–56; sequence GHSKTMMAAFIIAIKGTIKQAVMLG. A helical membrane pass occupies residues 57 to 77; it reads LAATISHTAVVWLIAFGGMVI. Residues 78–86 are Periplasmic-facing; sequence SKRFTAQSA. Residues 87 to 107 form a helical membrane-spanning segment; the sequence is EPWLQLISAVIIISTAFWMFW. The Cytoplasmic portion of the chain corresponds to 108 to 185; sequence RTWRGERNWL…FDGREVTNWQ (78 aa). The segment at 127-164 is disordered; it reads HEHHHHDHEHHQDHDHDHDHEHHHHHEHGDNEEYQDAH. Basic and acidic residues-rich tracts occupy residues 135 to 146 and 153 to 164; these read EHHQDHDHDHDH and EHGDNEEYQDAH. The chain crosses the membrane as a helical span at residues 186–206; that stretch reads ILLFGLTGGLIPCPAAITVLL. Over 207–220 the chain is Periplasmic; it reads ICIQLKALTLGATL. The chain crosses the membrane as a helical span at residues 221–241; it reads VVSFSIGLALTLVTVGVGAAI. Residues 242 to 262 are Cytoplasmic-facing; sequence SVQQVAKRWSGFNTLAKRAPY. A helical membrane pass occupies residues 263-283; sequence FSSLLIGLVGVYMGVHGFMGI. Over 284-285 the chain is Periplasmic; the sequence is MR.

The protein belongs to the NiCoT transporter (TC 2.A.52) family. RcnA subfamily.

The protein resides in the cell inner membrane. Its function is as follows. Efflux system for nickel and cobalt. In Shigella dysenteriae serotype 1 (strain Sd197), this protein is Nickel/cobalt efflux system RcnA (rcnA).